A 509-amino-acid chain; its full sequence is ATP synthase subunit alpha 1 (509 aa).

Residue 172–179 participates in ATP binding; it reads GDRQTGKT.

It belongs to the ATPase alpha/beta chains family. F-type ATPases have 2 components, CF(1) - the catalytic core - and CF(0) - the membrane proton channel. CF(1) has five subunits: alpha(3), beta(3), gamma(1), delta(1), epsilon(1). CF(0) has four main subunits: a(1), b(1), b'(1) and c(9-12).

It localises to the cell inner membrane. It carries out the reaction ATP + H2O + 4 H(+)(in) = ADP + phosphate + 5 H(+)(out). Produces ATP from ADP in the presence of a proton gradient across the membrane. The alpha chain is a regulatory subunit. This chain is ATP synthase subunit alpha 1, found in Dinoroseobacter shibae (strain DSM 16493 / NCIMB 14021 / DFL 12).